The chain runs to 209 residues: Large ribosomal subunit protein uL3 (209 aa).

Belongs to the universal ribosomal protein uL3 family. Part of the 50S ribosomal subunit. Forms a cluster with proteins L14 and L19.

Its function is as follows. One of the primary rRNA binding proteins, it binds directly near the 3'-end of the 23S rRNA, where it nucleates assembly of the 50S subunit. This Oceanobacillus iheyensis (strain DSM 14371 / CIP 107618 / JCM 11309 / KCTC 3954 / HTE831) protein is Large ribosomal subunit protein uL3.